The sequence spans 344 residues: Arginine N-succinyltransferase (344 aa).

A succinyl-CoA-binding site is contributed by Leu125. Catalysis depends on His229, which acts as the Proton donor.

The protein belongs to the arginine N-succinyltransferase family.

The enzyme catalyses succinyl-CoA + L-arginine = N(2)-succinyl-L-arginine + CoA + H(+). It functions in the pathway amino-acid degradation; L-arginine degradation via AST pathway; L-glutamate and succinate from L-arginine: step 1/5. Functionally, catalyzes the transfer of succinyl-CoA to arginine to produce N(2)-succinylarginine. This chain is Arginine N-succinyltransferase, found in Salmonella arizonae (strain ATCC BAA-731 / CDC346-86 / RSK2980).